The chain runs to 384 residues: Putative aminohydrolase MTH_994 (384 aa).

4 residues coordinate Zn(2+): histidine 60, histidine 62, histidine 207, and aspartate 291.

This sequence belongs to the metallo-dependent hydrolases superfamily. ATZ/TRZ family.

The sequence is that of Putative aminohydrolase MTH_994 from Methanothermobacter thermautotrophicus (strain ATCC 29096 / DSM 1053 / JCM 10044 / NBRC 100330 / Delta H) (Methanobacterium thermoautotrophicum).